The primary structure comprises 533 residues: Calcitonin receptor (533 aa).

The first 41 residues, 1–41 (MTPRRSRVKRRNLRKPKMRFLLVNRFTLLLLLLVSPTPVLQ), serve as a signal peptide directing secretion. The Extracellular segment spans residues 42-163 (APTNLTDSGL…FTSEKLQNAY (122 aa)). 4 N-linked (GlcNAc...) asparagine glycosylation sites follow: N45, N90, N142, and N147. 3 disulfides stabilise this stretch: C72–C98, C89–C129, and C112–C151. Residues 164–186 (VLYYLALVGHSLSIAALVASMLI) traverse the membrane as a helical segment. Over 187-198 (FWIFKNLSCQRV) the chain is Cytoplasmic. The helical transmembrane segment at 199–219 (TLHKHMFLTYILNSIIIIIHL) threads the bilayer. The Extracellular segment spans residues 220 to 273 (VEVVPNGDLVRRDPMHIFHHNTHMWTMQWELSPPLPLSAHEGKMDPHASEVISC). C273 and C343 are oxidised to a cystine. A helical transmembrane segment spans residues 274–296 (KVLHFLHQYMMSCNYFWMLCEGI). Residues 297-313 (YLHTLIVMAVFTDEQRL) are Cytoplasmic-facing. The chain crosses the membrane as a helical span at residues 314-334 (RWYYLLGWGFPIVPTIIHAIT). Over 335 to 350 (RALYYNDNCWLSAETH) the chain is Extracellular. The chain crosses the membrane as a helical span at residues 351 to 374 (LLYIIHGPVMVALVVNFFFLLNIV). Over 375–394 (RVLVTKMRQTHEAESYMYLK) the chain is Cytoplasmic. A helical transmembrane segment spans residues 395–413 (AVKATMVLVPLLGIQFVVF). Topologically, residues 414-421 (PWRPSNKV) are extracellular. Residues 422-448 (LGKIYDYLMHSLIHFQGFFVATIYCFC) traverse the membrane as a helical segment. The Cytoplasmic segment spans residues 449–533 (NHEVQVTLKR…MNVIQQDASA (85 aa)).

This sequence belongs to the G-protein coupled receptor 2 family. In terms of assembly, heterodimer of CALCR and RAMP1, RAMP2 or RAMP3; the receptor complexes function as AMYR1, AMYR2 and AMYR3 receptors, respectively, and respond to amylin/IAPP, calcitonin/CT and CGRP1 ligands. Interacts with GPRASP2.

The protein localises to the cell membrane. Its function is as follows. G protein-coupled receptor activated by ligand peptides amylin (IAPP), calcitonin (CT/CALCA) and calcitonin gene-related peptide type 1 (CGRP1/CALCA). CALCR interacts with receptor-activity-modifying proteins RAMP1, 2 and 3 to form receptor complexes AMYR1, 2 and 3, respectively. IAPP, CT and CGRP1 activate CALCR and AMYRs with distinct modes of receptor activation resulting in specific phenotypes. Ligand binding causes a conformation change that triggers signaling via guanine nucleotide-binding proteins (G proteins) and modulates the activity of downstream effectors. Activates cAMP-dependent pathway. The chain is Calcitonin receptor from Mus musculus (Mouse).